A 242-amino-acid polypeptide reads, in one-letter code: Protein HTATIP2 (242 aa).

An N-acetylalanine modification is found at Ala2. The interval 2–25 (ADKEALPKLREDFKMQNKSVFILG) is required for interaction with elongation factor EEF1A1. Ser27, Gly28, Glu29, Thr30, Arg52, Arg53, Leu92, Gly93, Tyr143, Lys147, Leu170, and Arg178 together coordinate NADPH. Tyr143 serves as the catalytic Proton acceptor. Lys147 is a catalytic residue.

Monomer. Forms homodimers during oxidative stress. Interacts (via N-terminus) with elongation factor EEF1A1 (via middle-region); the interaction is direct and competes with EEF1A1 binding to guanyl-nucleotide exchange factor EEF1B2, thereby inhibiting GDP for GTP exchange and reactivation of EEF1A1. Interacts with nuclear transport receptors XPO4, IPO5/RANBP5, IPO7, IPO9 and KPNB1 as well as GCN1L1/GCN1 and LRPPRC probably through their HEAT repeats. Binds NCOA5/CIA.

The protein localises to the cytoplasm. In terms of biological role, represses translation by preventing reactivation of elongation factor eEF1A. May also inhibit nuclear import by competing with nuclear import substrates for binding to a subset of nuclear transport receptors. Has additionally been proposed to act as a redox sensor involved in cellular oxidative stress surveillance. The chain is Protein HTATIP2 from Mus musculus (Mouse).